A 173-amino-acid chain; its full sequence is MYSFMGGGLFCAWVGTILLVVATATDHWMQYRLSGSFAHQGLWRYCLGNKCFLQTESIAYWNATRAFMILSALCATSGIIMGVLAFAQQSTFTRLSRPFSAGIMFFASTLFVLLALAIYTGVTVSFLGRRFGDWRFSWSYILGWVALLMTFFAGIFYMCAYRMHECRRLATPR.

The Cytoplasmic segment spans residues Met1–Ser3. Residues Phe4 to Ala24 form a helical membrane-spanning segment. Topologically, residues Thr25–Ala66 are extracellular. C-linked (Man) tryptophan glycosylation is found at Trp43 and Trp61. An N-linked (GlcNAc...) asparagine glycan is attached at Asn62. A helical membrane pass occupies residues Phe67–Ala87. Topologically, residues Gln88–Pro98 are cytoplasmic. A helical membrane pass occupies residues Phe99–Tyr119. Over Thr120–Tyr140 the chain is Extracellular. Residues Ile141–Tyr161 form a helical membrane-spanning segment. The Cytoplasmic segment spans residues Arg162 to Arg173. Thr171 carries the phosphothreonine modification.

This sequence belongs to the PMP-22/EMP/MP20 family. As to quaternary structure, seems to be associated with itself or another lens membrane component via disulfide bonds.

It is found in the membrane. Its function is as follows. Present in the thicker 16-17 nm junctions of mammalian lens fiber cells, where it may contribute to cell junctional organization. Acts as a receptor for calmodulin. May play an important role in both lens development and cataractogenesis. The protein is Lens fiber membrane intrinsic protein (Lim2) of Mus musculus (Mouse).